The following is a 223-amino-acid chain: Probable transaldolase (223 aa).

Catalysis depends on Lys-83, which acts as the Schiff-base intermediate with substrate.

Belongs to the transaldolase family. Type 3B subfamily.

It localises to the cytoplasm. The catalysed reaction is D-sedoheptulose 7-phosphate + D-glyceraldehyde 3-phosphate = D-erythrose 4-phosphate + beta-D-fructose 6-phosphate. It participates in carbohydrate degradation; pentose phosphate pathway; D-glyceraldehyde 3-phosphate and beta-D-fructose 6-phosphate from D-ribose 5-phosphate and D-xylulose 5-phosphate (non-oxidative stage): step 2/3. In terms of biological role, transaldolase is important for the balance of metabolites in the pentose-phosphate pathway. In Myxococcus xanthus (strain DK1622), this protein is Probable transaldolase.